A 374-amino-acid polypeptide reads, in one-letter code: tRNA-specific 2-thiouridylase MnmA (374 aa).

Residues 12-19 (GMSGGVDS) and Met-38 each bind ATP. The interaction with target base in tRNA stretch occupies residues 98-100 (NPD). Catalysis depends on Cys-103, which acts as the Nucleophile. Residues Cys-103 and Cys-202 are joined by a disulfide bond. Gly-128 contacts ATP. Residues 152-154 (KDQ) are interaction with tRNA. Residue Cys-202 is the Cysteine persulfide intermediate of the active site. Positions 316-317 (RY) are interaction with tRNA.

It belongs to the MnmA/TRMU family.

The protein resides in the cytoplasm. It carries out the reaction S-sulfanyl-L-cysteinyl-[protein] + uridine(34) in tRNA + AH2 + ATP = 2-thiouridine(34) in tRNA + L-cysteinyl-[protein] + A + AMP + diphosphate + H(+). In terms of biological role, catalyzes the 2-thiolation of uridine at the wobble position (U34) of tRNA, leading to the formation of s(2)U34. This chain is tRNA-specific 2-thiouridylase MnmA, found in Vibrio vulnificus (strain CMCP6).